The following is a 27-amino-acid chain: Snake venom serine protease Afaacytin alpha/beta/beta' chains (27 aa).

Residues 1-27 form the Peptidase S1 domain; it reads VIGGAECNINEHRSLVLLYXSSSXFGE.

It belongs to the peptidase S1 family. Snake venom subfamily. Heterodimer of an alpha and a beta chain. Subunit beta is constituted of two disulfide-linked polypeptidic chains, beta and beta'. Calcium appears to be required for structural cohesion of the molecule. In terms of processing, both chains alpha and beta are N-glycosylated. As to expression, expressed by the venom gland.

Its subcellular location is the secreted. With respect to regulation, inhibited by diisopropylfluorophosphate (DFP), benzamidine, heparin and hirudin, but not by plasmatic thrombin inhibitors, antithrombin-III and ecotin. Functionally, snake venom serine protease that exhibits alpha-fibrinase and beta-fibrinogenase activities. It replaces missing factors VIII (F8) and IX (F9) in deficient plasmas by activating purified human factor X (F10) into factor Xa. It releases serotonin from platelets and induces platelet aggregation in human (but not in rabbit). Has caseinolytic, arginine-esterase and amidase activities. This chain is Snake venom serine protease Afaacytin alpha/beta/beta' chains, found in Cerastes cerastes (Horned desert viper).